The sequence spans 796 residues: Protein translocase subunit SecA 2 (796 aa).

Residues Gln84, 102 to 106 (GEGKT), and Asp496 each bind ATP.

The protein belongs to the SecA family. As to quaternary structure, monomer and homodimer. Part of the essential Sec protein translocation apparatus which comprises SecA, SecYEG and auxiliary proteins SecDF. Other proteins may also be involved.

It is found in the cell membrane. It localises to the cytoplasm. The enzyme catalyses ATP + H2O + cellular proteinSide 1 = ADP + phosphate + cellular proteinSide 2.. Part of the Sec protein translocase complex. Interacts with the SecYEG preprotein conducting channel. Has a central role in coupling the hydrolysis of ATP to the transfer of proteins into and across the cell membrane, serving as an ATP-driven molecular motor driving the stepwise translocation of polypeptide chains across the membrane. The sequence is that of Protein translocase subunit SecA 2 from Staphylococcus haemolyticus (strain JCSC1435).